The following is a 180-amino-acid chain: Shikimate kinase (180 aa).

14–19 (GAGKSS) contributes to the ATP binding site. Ser18 provides a ligand contact to Mg(2+). Substrate contacts are provided by Asp36, Arg60, and Gly82. Position 120 (Arg120) interacts with ATP. Substrate is bound at residue Arg139.

This sequence belongs to the shikimate kinase family. Monomer. It depends on Mg(2+) as a cofactor.

Its subcellular location is the cytoplasm. It carries out the reaction shikimate + ATP = 3-phosphoshikimate + ADP + H(+). It functions in the pathway metabolic intermediate biosynthesis; chorismate biosynthesis; chorismate from D-erythrose 4-phosphate and phosphoenolpyruvate: step 5/7. Its function is as follows. Catalyzes the specific phosphorylation of the 3-hydroxyl group of shikimic acid using ATP as a cosubstrate. This is Shikimate kinase from Xylella fastidiosa (strain 9a5c).